The chain runs to 81 residues: GAMMA-ctenitoxin-Pn1a (81 aa).

The signal sequence occupies residues 1–16 (MKVAIVFLSLLVLAFA). Residues 17-34 (SESIEENREEFPVEESAR) constitute a propeptide that is removed on maturation. Disulfide bonds link Cys-35–Cys-49, Cys-42–Cys-55, Cys-46–Cys-81, Cys-48–Cys-65, and Cys-57–Cys-63.

It belongs to the neurotoxin 03 (Tx2) family. 05 subfamily. In terms of tissue distribution, expressed by the venom gland.

Its subcellular location is the secreted. Its function is as follows. This insecticidal neurotoxin targets two types of channels/receptors. It reversibly inhibits the N-methyl-D-aspartate (NMDA)-subtype of ionotropic glutamate receptor (GRIN). It inhibits glutamate uptake from rat brain synaptosomes, and blocks GRIN in hippocampal slices. It also acts on sodium channels of both insects and mammals. On sodium channel insects, it strongly slows down channel inactivation (EC(50)=212.5 nM) and causes an increase (105%) in peak amplitude (at 1 uM) of B.germanica sodium channel (Nav), whereas it inhibits all mammalien sodium channels tested with the following order of potency: Nav1.3/SCN3A (IC(50)=1.5 uM) &gt; Nav1.6/SCN8A &gt; Nav1.5/SCN5A &gt; Nav1.4/SCN4A &gt;= Nav1.2/SCN2A. In vivo, it is highly toxic to house fly (Musca domestica), cockroach (Periplaneta americana), and cricket (Acheta domesticus). In different rat pain models (induced by PGE2, carrageenan or glutamate), it shows antinociceptive effect that may be related to an inhibitory activity on the glutamatergic system. The polypeptide is GAMMA-ctenitoxin-Pn1a (Phoneutria nigriventer (Brazilian armed spider)).